A 44-amino-acid chain; its full sequence is Alpha-amylase inhibitor helianthamide (44 aa).

Intrachain disulfides connect Cys-6/Cys-38, Cys-16/Cys-33, and Cys-20/Cys-39. Residues 7–10 are inhibitory motif; it reads YIYH.

The protein belongs to the sea anemone alpha-amylase inhibitor family.

It is found in the secreted. In terms of biological role, specific pancreatic alpha-amylase (AMY2A) inhibitor. The recombinant peptide inhibits human pancreatic (Ki=0.01 nM) and porcine pancreatic alpha-amylases (Ki=0.1 nM). The protein is Alpha-amylase inhibitor helianthamide of Stichodactyla helianthus (Sun anemone).